Consider the following 241-residue polypeptide: 7-cyano-7-deazaguanine synthase (241 aa).

9–19 (LSGGLDSSTVL) serves as a coordination point for ATP. Zn(2+)-binding residues include cysteine 189, cysteine 197, cysteine 200, and cysteine 203.

This sequence belongs to the QueC family. Zn(2+) serves as cofactor.

The catalysed reaction is 7-carboxy-7-deazaguanine + NH4(+) + ATP = 7-cyano-7-deazaguanine + ADP + phosphate + H2O + H(+). It participates in purine metabolism; 7-cyano-7-deazaguanine biosynthesis. Catalyzes the ATP-dependent conversion of 7-carboxy-7-deazaguanine (CDG) to 7-cyano-7-deazaguanine (preQ(0)). This chain is 7-cyano-7-deazaguanine synthase, found in Thermoplasma volcanium (strain ATCC 51530 / DSM 4299 / JCM 9571 / NBRC 15438 / GSS1).